The chain runs to 46 residues: Lantibiotic streptin (46 aa).

A propeptide spanning residues 1-24 (MNNTIKDFDLDLKTNKKDTATPYV) is cleaved from the precursor.

The protein belongs to the type A lantibiotic family. In terms of processing, maturation of lantibiotics involves the enzymatic conversion of Thr, and Ser into dehydrated AA and the formation of thioether bonds with cysteine. This is followed by membrane translocation and cleavage of the modified precursor.

Functionally, lanthionine-containing peptide antibiotic (lantibiotic) active on certain Gram-positive bacteria. The bactericidal activity of lantibiotics is based on depolarization of energized bacterial cytoplasmic membranes, initiated by the formation of aqueous transmembrane pores. This chain is Lantibiotic streptin (srtA), found in Streptococcus pyogenes serotype M1.